The sequence spans 322 residues: Epiphycan (322 aa).

The first 19 residues, 1–19, serve as a signal peptide directing secretion; that stretch reads MGMLARVALGLIIIDAVLA. Residues 58-108 are disordered; the sequence is KVSERLSGNRELLTPGPQLGDNQDEDKDEESTPRLIDGSSPQEPEFPGLLG. Residue Ser-64 is glycosylated (O-linked (Xyl...) (dermatan sulfate) serine). Residue Ser-96 is glycosylated (O-linked (GalNAc...) serine). The LRRNT domain occupies 106 to 143; the sequence is LLGPHTNEDFPTCLLCTCISTTVYCDDHELDAIPPLPK. Cys-118 and Cys-130 are disulfide-bonded. 5 LRR repeats span residues 144–165, 168–189, 192–213, 238–258, and 259–280; these read KTTYFYSRFNRIKKINKNDFAS, DLKRIDLTSNLISEIDEDAFRK, HLQELVLRDNKIKQLPELPNTL, DLHHLYITDNSLDHIPLPLPE, and SLRALHLQNNDILEMHEDTFCN. Cysteines 279 and 312 form a disulfide. 2 N-linked (GlcNAc...) asparagine glycosylation sites follow: Asn-283 and Asn-302. One copy of the LRR 6 repeat lies at 290–310; sequence ALEDIRLDGNPINLSRTPQAY.

Belongs to the small leucine-rich proteoglycan (SLRP) family. SLRP class III subfamily. In terms of processing, the O-linked polysaccharide on Ser-96 is probably the mucin type linked to GalNAc. There is one glycosaminoglycan chain, known to be dermatan sulfate, and it is probably the O-glycosylation at Ser-64. Confined to the middle zone of embryonic epiphyseal cartilage consisting of flattened chondrocytes and the ossifying region in the limb buds of chick embryos. Has also been detected in testis.

It is found in the secreted. It localises to the extracellular space. The protein resides in the extracellular matrix. Functionally, may have a role in bone formation and also in establishing the ordered structure of cartilage through matrix organization. In Mus musculus (Mouse), this protein is Epiphycan (Epyc).